Consider the following 484-residue polypeptide: tRNA sulfurtransferase (484 aa).

The region spanning 63 to 167 (EAFGERLACI…NDNLYLIDKR (105 aa)) is the THUMP domain. ATP-binding positions include 185-186 (LI), Lys-267, Gly-289, and Gln-298. A disulfide bridge connects residues Cys-346 and Cys-458. One can recognise a Rhodanese domain in the interval 406–484 (INANEIIIDV…GYTNVKVYRP (79 aa)). The Cysteine persulfide intermediate role is filled by Cys-458.

It belongs to the ThiI family.

It is found in the cytoplasm. The enzyme catalyses [ThiI sulfur-carrier protein]-S-sulfanyl-L-cysteine + a uridine in tRNA + 2 reduced [2Fe-2S]-[ferredoxin] + ATP + H(+) = [ThiI sulfur-carrier protein]-L-cysteine + a 4-thiouridine in tRNA + 2 oxidized [2Fe-2S]-[ferredoxin] + AMP + diphosphate. The catalysed reaction is [ThiS sulfur-carrier protein]-C-terminal Gly-Gly-AMP + S-sulfanyl-L-cysteinyl-[cysteine desulfurase] + AH2 = [ThiS sulfur-carrier protein]-C-terminal-Gly-aminoethanethioate + L-cysteinyl-[cysteine desulfurase] + A + AMP + 2 H(+). Its pathway is cofactor biosynthesis; thiamine diphosphate biosynthesis. Its function is as follows. Catalyzes the ATP-dependent transfer of a sulfur to tRNA to produce 4-thiouridine in position 8 of tRNAs, which functions as a near-UV photosensor. Also catalyzes the transfer of sulfur to the sulfur carrier protein ThiS, forming ThiS-thiocarboxylate. This is a step in the synthesis of thiazole, in the thiamine biosynthesis pathway. The sulfur is donated as persulfide by IscS. This is tRNA sulfurtransferase from Shewanella halifaxensis (strain HAW-EB4).